The chain runs to 326 residues: tRNA-modifying protein YgfZ (326 aa).

Residues W27 and W189 each coordinate folate.

This sequence belongs to the tRNA-modifying YgfZ family.

Its subcellular location is the cytoplasm. Its function is as follows. Folate-binding protein involved in regulating the level of ATP-DnaA and in the modification of some tRNAs. It is probably a key factor in regulatory networks that act via tRNA modification, such as initiation of chromosomal replication. The chain is tRNA-modifying protein YgfZ from Escherichia coli O139:H28 (strain E24377A / ETEC).